Consider the following 545-residue polypeptide: Chaperonin GroEL 1 (545 aa).

Residues 29–32 (TLGP), 86–90 (DGTTT), Gly413, 479–481 (DAA), and Asp495 contribute to the ATP site. Residues 525–545 (PEPKENNPAGSGAGMGGDFDY) are disordered. Residues 535–545 (SGAGMGGDFDY) show a composition bias toward gly residues.

The protein belongs to the chaperonin (HSP60) family. Forms a cylinder of 14 subunits composed of two heptameric rings stacked back-to-back. Interacts with the co-chaperonin GroES.

Its subcellular location is the cytoplasm. The catalysed reaction is ATP + H2O + a folded polypeptide = ADP + phosphate + an unfolded polypeptide.. Together with its co-chaperonin GroES, plays an essential role in assisting protein folding. The GroEL-GroES system forms a nano-cage that allows encapsulation of the non-native substrate proteins and provides a physical environment optimized to promote and accelerate protein folding. The sequence is that of Chaperonin GroEL 1 from Thermostichus vulcanus (Synechococcus vulcanus).